A 271-amino-acid chain; its full sequence is Shikimate dehydrogenase (NADP(+)) (271 aa).

Shikimate contacts are provided by residues 14-16 and Thr61; that span reads SKS. Catalysis depends on Lys65, which acts as the Proton acceptor. Shikimate-binding residues include Asn86 and Asp102. NADP(+)-binding positions include 126–130, 149–154, and Met213; these read GAGGA and NRTFSR. Tyr215 lines the shikimate pocket. Position 238 (Gly238) interacts with NADP(+).

The protein belongs to the shikimate dehydrogenase family. Homodimer.

The catalysed reaction is shikimate + NADP(+) = 3-dehydroshikimate + NADPH + H(+). It participates in metabolic intermediate biosynthesis; chorismate biosynthesis; chorismate from D-erythrose 4-phosphate and phosphoenolpyruvate: step 4/7. Its function is as follows. Involved in the biosynthesis of the chorismate, which leads to the biosynthesis of aromatic amino acids. Catalyzes the reversible NADPH linked reduction of 3-dehydroshikimate (DHSA) to yield shikimate (SA). The sequence is that of Shikimate dehydrogenase (NADP(+)) from Histophilus somni (strain 2336) (Haemophilus somnus).